The primary structure comprises 154 residues: Transcriptional repressor NrdR (154 aa).

A zinc finger lies at 3–34 (CPFCGANDTKVIDSRLVAEGEQVRRRRECLAC). The ATP-cone domain maps to 49-139 (PRLIKQDGSR…VYRRFQDLNE (91 aa)).

Belongs to the NrdR family. Requires Zn(2+) as cofactor.

In terms of biological role, negatively regulates transcription of bacterial ribonucleotide reductase nrd genes and operons by binding to NrdR-boxes. The polypeptide is Transcriptional repressor NrdR (Pseudomonas syringae pv. syringae (strain B728a)).